The primary structure comprises 64 residues: Palmitoyl-CoA hydrolase (64 aa).

Belongs to the type-B carboxylesterase/lipase family. In terms of assembly, monomer and homotrimer.

The protein localises to the microsome. The protein resides in the endoplasmic reticulum. The catalysed reaction is hexadecanoyl-CoA + H2O = hexadecanoate + CoA + H(+). Its function is as follows. Hydrolysis of a variety of CoA thioesters of long-chain fatty acids. In Rattus norvegicus (Rat), this protein is Palmitoyl-CoA hydrolase.